Here is a 124-residue protein sequence, read N- to C-terminus: Protein MGF 110-4L (124 aa).

Residues 1–18 form the signal peptide; it reads MLVIFLGILGLLANQVLG. N64 is a glycosylation site (N-linked (GlcNAc...) asparagine; by host). The short motif at 121–124 is the Prevents secretion from ER element; that stretch reads KEDL.

This sequence belongs to the asfivirus MGF 110 family.

It localises to the virion. It is found in the host endoplasmic reticulum-Golgi intermediate compartment. Functionally, causes the redistribution of lumenal ER protein to an enlarged ERGIC compartment. This chain is Protein MGF 110-4L, found in Ornithodoros (relapsing fever ticks).